The sequence spans 107 residues: Parvalbumin beta 2 (107 aa).

Residue serine 1 is modified to N-acetylserine. EF-hand domains are found at residues 37–72 (XSPD…FSAS) and 89–107 (DADG…LVKQ). Aspartate 50, aspartate 52, serine 54, phenylalanine 56, glutamate 58, glutamate 61, aspartate 89, aspartate 91, aspartate 93, methionine 95, and glutamate 100 together coordinate Ca(2+).

Belongs to the parvalbumin family.

In muscle, parvalbumin is thought to be involved in relaxation after contraction. It binds two calcium ions. In Oncorhynchus mykiss (Rainbow trout), this protein is Parvalbumin beta 2.